The chain runs to 284 residues: Diaminopimelate epimerase (284 aa).

3 residues coordinate substrate: asparagine 21, glutamine 54, and asparagine 74. Cysteine 83 acts as the Proton donor in catalysis. Residues 84 to 85, asparagine 167, asparagine 200, and 218 to 219 contribute to the substrate site; these read GN and ER. Cysteine 227 acts as the Proton acceptor in catalysis. 228-229 is a binding site for substrate; it reads GS.

It belongs to the diaminopimelate epimerase family. As to quaternary structure, homodimer.

It localises to the cytoplasm. The catalysed reaction is (2S,6S)-2,6-diaminopimelate = meso-2,6-diaminopimelate. It functions in the pathway amino-acid biosynthesis; L-lysine biosynthesis via DAP pathway; DL-2,6-diaminopimelate from LL-2,6-diaminopimelate: step 1/1. Functionally, catalyzes the stereoinversion of LL-2,6-diaminopimelate (L,L-DAP) to meso-diaminopimelate (meso-DAP), a precursor of L-lysine and an essential component of the bacterial peptidoglycan. This Buchnera aphidicola subsp. Acyrthosiphon pisum (strain 5A) protein is Diaminopimelate epimerase.